Consider the following 444-residue polypeptide: Trigger factor (444 aa).

In terms of domain architecture, PPIase FKBP-type spans 165–250 (GDFAKFDFEG…LHEIQELKIP (86 aa)).

It belongs to the FKBP-type PPIase family. Tig subfamily.

It is found in the cytoplasm. The enzyme catalyses [protein]-peptidylproline (omega=180) = [protein]-peptidylproline (omega=0). In terms of biological role, involved in protein export. Acts as a chaperone by maintaining the newly synthesized protein in an open conformation. Functions as a peptidyl-prolyl cis-trans isomerase. This is Trigger factor from Campylobacter jejuni subsp. jejuni serotype O:6 (strain 81116 / NCTC 11828).